A 230-amino-acid chain; its full sequence is DNA repair protein rdl1 (230 aa).

Interacts with rlp1 and sws1.

Its subcellular location is the cytoplasm. It localises to the nucleus. In terms of biological role, involved in homologous recombination where it functions at an early stage of recombination in a pre-recombinogenic complex with rlp1 and sws1. Also has a role at a later stage of recombination in association with the rhp55-rhp57 complex. The chain is DNA repair protein rdl1 (rdl1) from Schizosaccharomyces pombe (strain 972 / ATCC 24843) (Fission yeast).